A 483-amino-acid chain; its full sequence is Isocitrate dehydrogenase [NADP] (483 aa).

Thr74 serves as a coordination point for NADP(+). D-threo-isocitrate is bound by residues Ser83, Asn85, Arg89, Arg99, and Arg121. Position 232 (Asp232) interacts with Mg(2+). NADP(+)-binding positions include 264-270 (HGSAPDI) and Asn277.

It belongs to the isocitrate and isopropylmalate dehydrogenases family. In terms of assembly, homodimer. Mg(2+) serves as cofactor. The cofactor is Mn(2+).

It carries out the reaction D-threo-isocitrate + NADP(+) = 2-oxoglutarate + CO2 + NADPH. Functionally, catalyzes the oxidative decarboxylation of isocitrate to 2-oxoglutarate and carbon dioxide with the concomitant reduction of NADP(+). This chain is Isocitrate dehydrogenase [NADP] (icd), found in Rickettsia conorii (strain ATCC VR-613 / Malish 7).